The sequence spans 802 residues: Fibroblast growth factor receptor 4 (802 aa).

An N-terminal signal peptide occupies residues 1–21; the sequence is MRLLLALLGVLLSVPGPPVLS. The Ig-like C2-type 1 domain occupies 22-118; that stretch reads LEASEEVELE…VLQNLTLITG (97 aa). Residues 22–369 lie on the Extracellular side of the membrane; that stretch reads LEASEEVELE…AAAPEARYTD (348 aa). Cysteine 57 and cysteine 101 are oxidised to a cystine. Asparagine 112 is a glycosylation site (N-linked (GlcNAc...) asparagine). The segment at 119 to 148 is disordered; it reads DSLTSSNDDEDPKSHRDPSNRHSYPQQAPY. Ig-like C2-type domains lie at 152 to 240 and 249 to 349; these read PQRM…YLLD and PILQ…AWLT. A disulfide bridge connects residues cysteine 172 and cysteine 224. Asparagine 258, asparagine 290, asparagine 311, and asparagine 322 each carry an N-linked (GlcNAc...) asparagine glycan. An intrachain disulfide couples cysteine 271 to cysteine 333. The helical transmembrane segment at 370-390 threads the bilayer; sequence IILYASGSLALAVLLLLAGLY. Position 390 is a phosphotyrosine; in variant R-388 (tyrosine 390). The Cytoplasmic portion of the chain corresponds to 391–802; the sequence is RGQALHGRHP…SFPFGSGVQT (412 aa). The 289-residue stretch at 467-755 folds into the Protein kinase domain; the sequence is LVLGKPLGEG…VLLAVSEEYL (289 aa). ATP contacts are provided by residues 473-481 and lysine 503; that span reads LGEGCFGQV. At serine 573 the chain carries Phosphoserine. Catalysis depends on aspartate 612, which acts as the Proton acceptor. Phosphotyrosine; by autocatalysis occurs at positions 642, 643, and 754.

This sequence belongs to the protein kinase superfamily. Tyr protein kinase family. Fibroblast growth factor receptor subfamily. As to quaternary structure, monomer. Homodimer after ligand binding. Interacts with FGF1, FGF2, FGF4, FGF6, FGF8, FGF9, FGF16, FGF17, FGF18, FGF19, FGF21 and FGF23 (in vitro). Binding affinity for FGF family members is enhanced by interactions between FGFs and heparan sulfate proteoglycans. Interacts with KLB; this strongly increases the affinity for FGF19 and FGF23. Affinity for FGF19 is strongly increased by KLB and sulfated glycosaminoglycans. KLB and KL both interact with the core-glycosylated FGFR4 in the endoplasmic reticulum and promote its degradation, so that only FGFR4 with fully mature N-glycans is expressed at the cell surface. Identified in a complex with NCAM1, CDH2, PLCG1, FRS2, SRC, SHC1, GAP43 and CTTN. Interacts with MMP14 and HIP1. Interacts with STAT3. Post-translationally, N-glycosylated. Full maturation of the glycan chains in the Golgi is essential for high affinity interaction with FGF19. In terms of processing, ubiquitinated. Subject to proteasomal degradation when not fully glycosylated. Autophosphorylated. Binding of FGF family members together with heparan sulfate proteoglycan or heparin promotes receptor dimerization and autophosphorylation on tyrosine residues. Autophosphorylation occurs in trans between the two FGFR molecules present in the dimer. In terms of tissue distribution, expressed in gastrointestinal epithelial cells, pancreas, and gastric and pancreatic cancer cell lines.

The protein localises to the cell membrane. It localises to the endosome. The protein resides in the endoplasmic reticulum. It is found in the secreted. It catalyses the reaction L-tyrosyl-[protein] + ATP = O-phospho-L-tyrosyl-[protein] + ADP + H(+). Present in an inactive conformation in the absence of bound ligand. Ligand binding leads to dimerization and activation by autophosphorylation on tyrosine residues. Its function is as follows. Tyrosine-protein kinase that acts as a cell-surface receptor for fibroblast growth factors and plays a role in the regulation of cell proliferation, differentiation and migration, and in regulation of lipid metabolism, bile acid biosynthesis, glucose uptake, vitamin D metabolism and phosphate homeostasis. Required for normal down-regulation of the expression of CYP7A1, the rate-limiting enzyme in bile acid synthesis, in response to FGF19. Phosphorylates PLCG1 and FRS2. Ligand binding leads to the activation of several signaling cascades. Activation of PLCG1 leads to the production of the cellular signaling molecules diacylglycerol and inositol 1,4,5-trisphosphate. Phosphorylation of FRS2 triggers recruitment of GRB2, GAB1, PIK3R1 and SOS1, and mediates activation of RAS, MAPK1/ERK2, MAPK3/ERK1 and the MAP kinase signaling pathway, as well as of the AKT1 signaling pathway. Promotes SRC-dependent phosphorylation of the matrix protease MMP14 and its lysosomal degradation. FGFR4 signaling is down-regulated by receptor internalization and degradation; MMP14 promotes internalization and degradation of FGFR4. Mutations that lead to constitutive kinase activation or impair normal FGFR4 inactivation lead to aberrant signaling. This Homo sapiens (Human) protein is Fibroblast growth factor receptor 4 (FGFR4).